A 438-amino-acid chain; its full sequence is Tol-Pal system protein TolB (438 aa).

The first 35 residues, 1 to 35 (MITMKNILKLRATGLLLLLLLMISVLGNGIGQAMA), serve as a signal peptide directing secretion.

It belongs to the TolB family. The Tol-Pal system is composed of five core proteins: the inner membrane proteins TolA, TolQ and TolR, the periplasmic protein TolB and the outer membrane protein Pal. They form a network linking the inner and outer membranes and the peptidoglycan layer.

Its subcellular location is the periplasm. Its function is as follows. Part of the Tol-Pal system, which plays a role in outer membrane invagination during cell division and is important for maintaining outer membrane integrity. The protein is Tol-Pal system protein TolB of Desulfotalea psychrophila (strain LSv54 / DSM 12343).